The primary structure comprises 727 residues: NADH-ubiquinone oxidoreductase 75 kDa subunit, mitochondrial (727 aa).

The transit peptide at Met1–Thr23 directs the protein to the mitochondrion. Residues Asn30–Lys108 form the 2Fe-2S ferredoxin-type domain. 3 residues coordinate [2Fe-2S] cluster: Cys64, Cys75, and Cys78. Lys84 carries the N6-acetyllysine modification. Cys92 is a [2Fe-2S] cluster binding site. One can recognise a 4Fe-4S His(Cys)3-ligated-type domain in the interval Lys108–Gly147. [4Fe-4S] cluster contacts are provided by His124, Cys128, Cys131, Cys137, Cys176, Cys179, Cys182, and Cys226. The 4Fe-4S Mo/W bis-MGD-type domain maps to Thr245–Arg301. N6-acetyllysine occurs at positions 499 and 709.

Belongs to the complex I 75 kDa subunit family. In terms of assembly, core subunit of respiratory chain NADH dehydrogenase (Complex I) which is composed of 45 different subunits. This is the largest subunit of complex I and it is a component of the iron-sulfur (IP) fragment of the enzyme. Complex I associates with ubiquinol-cytochrome reductase complex (Complex III) to form supercomplexes. Interacts with MDM2 and AKAP1. Requires [2Fe-2S] cluster as cofactor. The cofactor is [4Fe-4S] cluster.

Its subcellular location is the mitochondrion inner membrane. The catalysed reaction is a ubiquinone + NADH + 5 H(+)(in) = a ubiquinol + NAD(+) + 4 H(+)(out). Core subunit of the mitochondrial membrane respiratory chain NADH dehydrogenase (Complex I) which catalyzes electron transfer from NADH through the respiratory chain, using ubiquinone as an electron acceptor. Essential for catalysing the entry and efficient transfer of electrons within complex I. Plays a key role in the assembly and stability of complex I and participates in the association of complex I with ubiquinol-cytochrome reductase complex (Complex III) to form supercomplexes. In Bos taurus (Bovine), this protein is NADH-ubiquinone oxidoreductase 75 kDa subunit, mitochondrial (NDUFS1).